The chain runs to 481 residues: MLNRVRRTKIVATLGPSTDKANNLEKIILSGANVLRLNFSHGSSEEHKKRAKKAKEIMFKLNCHIALLGDLQGPKIRISKFKKNSIFLKVNDVFILDANLNEKNGNNERVGIDYKKLPNDLNVNDILLLDDGRIQLKVIKIEKCAIFTKVIIGGILSNNKGINKLGGGLSADALTEKDKKDIILASEIDVDYLAVSFPRCADDLIKARELLKKSGSNAQIIAKIERAEAVFDQNAIENIILSSDAIMIARGDLGVEIGDAELVGIQKKLIRTARKLNKVAITATQMMESMILNPLPTRAEVMDVANAVLDGSDAVMLSAETASGKYPSETVISMAKVCKGAEKVPSINVSRHRLNVEFQSIEEAIAMSSMYAANHLKGITAIITMTESGKTALMTSRITSGLPIFALSKHKKTLNLTALYRGVIPIYFDSDKDGVEAANEAIILLCKKKFLFNNDLVIVTQGDIMGKIGKTNTSRILRVTY.

Residue R36 participates in substrate binding. The K(+) site is built by N38, S40, and D70. 38–41 (NFSH) is an ATP binding site. Residues R77 and K160 each coordinate ATP. E225 lines the Mg(2+) pocket. Positions 251, 252, and 284 each coordinate substrate. D252 provides a ligand contact to Mg(2+).

It belongs to the pyruvate kinase family. As to quaternary structure, homotetramer. Requires Mg(2+) as cofactor. K(+) serves as cofactor.

It catalyses the reaction pyruvate + ATP = phosphoenolpyruvate + ADP + H(+). The protein operates within carbohydrate degradation; glycolysis; pyruvate from D-glyceraldehyde 3-phosphate: step 5/5. Allosterically activated by AMP and by several sugar phosphates. Belongs to type II PK. The sequence is that of Pyruvate kinase (pykA) from Buchnera aphidicola subsp. Schizaphis graminum (strain Sg).